Consider the following 227-residue polypeptide: Uracil-DNA glycosylase (227 aa).

Residue aspartate 68 is the Proton acceptor of the active site.

This sequence belongs to the uracil-DNA glycosylase (UDG) superfamily. UNG family.

Its subcellular location is the cytoplasm. It catalyses the reaction Hydrolyzes single-stranded DNA or mismatched double-stranded DNA and polynucleotides, releasing free uracil.. Excises uracil residues from the DNA which can arise as a result of misincorporation of dUMP residues by DNA polymerase or due to deamination of cytosine. The polypeptide is Uracil-DNA glycosylase (Mycobacterium ulcerans (strain Agy99)).